The following is a 209-amino-acid chain: Dehydration-responsive element-binding protein 1F (209 aa).

The Nuclear localization signal motif lies at 14 to 26; sequence KKRAGRRVFKETR. Residues 29 to 86 constitute a DNA-binding region (AP2/ERF); sequence VYRGIRRRNGDKWVCEVREPTHQRRIWLGTYPTADMAARAHDVAVLALRGRSACLNFA. The interval 137–157 is disordered; the sequence is FGSGSGSGSGSEERNSSSYGF.

The protein belongs to the AP2/ERF transcription factor family. ERF subfamily.

It is found in the nucleus. In terms of biological role, transcriptional activator that binds specifically to the DNA sequence 5'-[AG]CCGAC-3'. Binding to the C-repeat/DRE element mediates cold or dehydration-inducible transcription. CBF/DREB1 factors play a key role in freezing tolerance and cold acclimation. The protein is Dehydration-responsive element-binding protein 1F (DREB1F) of Arabidopsis thaliana (Mouse-ear cress).